A 176-amino-acid chain; its full sequence is Prion-like protein doppel (176 aa).

Residues 1-25 (MRKHLSWWWLATVCMLLFSHLSAVQ) form the signal peptide. The flexible tail stretch occupies residues 27–50 (RGIKHRIKWNRKALPSTAQITEAQ). O-linked (GalNAc...) threonine glycosylation is present at Thr43. The globular stretch occupies residues 51–152 (VAENRPGAFI…KHCEFWLERG (102 aa)). Intrachain disulfides connect Cys94–Cys145 and Cys108–Cys140. 2 N-linked (GlcNAc...) asparagine glycosylation sites follow: Asn98 and Asn110. The interval 122–139 (KPDNKLHQQVLWRLVQEL) is cu(2+) binding. Gly152 is lipidated: GPI-anchor amidated glycine. Positions 153-176 (AGLRVTMHQPVLLCLLALIWLTVK) are cleaved as a propeptide — removed in mature form.

This sequence belongs to the prion family. Post-translationally, N-glycosylated. N-glycosylated at two distinct sites. In terms of processing, O-glycosylated. In terms of tissue distribution, expressed in testis, in Sertoli cells, ejaculated spermatozoa and in seminal fluid (at protein level).

Its subcellular location is the cell membrane. Functionally, required for normal acrosome reaction and for normal male fertility. Can bind Cu(2+). The sequence is that of Prion-like protein doppel (PRND) from Homo sapiens (Human).